Reading from the N-terminus, the 306-residue chain is MNFGRVLTAMVTPFTDEGELNYDEAARLADYLATHGSDGLVVCGTTGESPTLTWQEEYELFRVVRDAVAGRAKVIAGTGSNSTREAIEATKKAAQLGLDGSLQVVPYYNKPTQAGLYEHFKAIAQASDLPILLYNIPSRTGASLQPETVAQLAELETVVAIKEASGMMDVASEIRRLTPSRFAIYSGDDSLTLPLLSLGGSGVVSVASHLVGLQLQELIQSYIRGQHDQALAHHLRLFPLFKVLFIETNPVPIKAALEMQGWRVGRARLPLAPLQPSSLQVLRQVLEEMGLLAESKGSEQMATKVS.

Thr46 contacts pyruvate. Catalysis depends on Tyr134, which acts as the Proton donor/acceptor. Lys162 (schiff-base intermediate with substrate) is an active-site residue. Val204 contributes to the pyruvate binding site.

This sequence belongs to the DapA family. Homotetramer; dimer of dimers.

It is found in the cytoplasm. It catalyses the reaction L-aspartate 4-semialdehyde + pyruvate = (2S,4S)-4-hydroxy-2,3,4,5-tetrahydrodipicolinate + H2O + H(+). Its pathway is amino-acid biosynthesis; L-lysine biosynthesis via DAP pathway; (S)-tetrahydrodipicolinate from L-aspartate: step 3/4. Its function is as follows. Catalyzes the condensation of (S)-aspartate-beta-semialdehyde [(S)-ASA] and pyruvate to 4-hydroxy-tetrahydrodipicolinate (HTPA). This Synechococcus sp. (strain JA-2-3B'a(2-13)) (Cyanobacteria bacterium Yellowstone B-Prime) protein is 4-hydroxy-tetrahydrodipicolinate synthase.